The chain runs to 348 residues: Spermatogenesis-associated protein 32 (348 aa).

Over residues 27-36 (YHHHHHPLED) the composition is skewed to basic and acidic residues. Residues 27 to 61 (YHHHHHPLEDNKDEDNEMGTELSSMKPPPKVDPDP) form a disordered region. 2 positions are modified to phosphoserine: serine 149 and serine 152. The disordered stretch occupies residues 308–329 (APATSPELQEDKDDSVPGTKKG). The residue at position 330 (threonine 330) is a Phosphothreonine.

Interacts with syntaxin-1 and ACTB. Abundantly expressed in testes. Expressed in germ cells, but not in Sertoli or Leydig cells of the adult testis. Localized at the acrosomal region of the round and elongated spermatids at stages VIII-X.

The polypeptide is Spermatogenesis-associated protein 32 (Spata32) (Rattus norvegicus (Rat)).